The following is a 1174-amino-acid chain: HEAT repeat-containing protein 6 (1174 aa).

Residues 168–207 (NELLGPTGILVNLCDPSQPDPELWREAIHCMANLCLGVPG) form an HEAT 1 repeat. Disordered stretches follow at residues 304-346 (GRSP…EELK) and 373-392 (LGPQKSPLDPHQGQVGKDHF). A compositionally biased stretch (basic residues) spans 323–335 (SKKKRKAGKQKKG). Over residues 336-346 (HQGEESKEELK) the composition is skewed to basic and acidic residues. HEAT repeat units lie at residues 460–498 (GIGSPQSVSLMTIALKDSSPKTRACALQVLSAILDGSKQ), 523–560 (SIRELHRCLLLAIVAESSAQTLTQIIKCLANLVSNAPY), and 566–603 (GLLTRVWNQIKPYIRNKDVNVRVSSLTLLGAIVSAQVS). Residues 619 to 648 (SQNSGSATPSDPESNRKESMLEGGKKNGLH) are disordered. Residues 631–648 (ESNRKESMLEGGKKNGLH) are compositionally biased toward basic and acidic residues.

This is HEAT repeat-containing protein 6 (heatr6) from Xenopus laevis (African clawed frog).